The primary structure comprises 86 residues: Large ribosomal subunit protein uL30m (86 aa).

Positions Gln-67–Asp-86 are disordered.

The protein belongs to the universal ribosomal protein uL30 family. In terms of assembly, component of the mitochondrial large ribosomal subunit (mt-LSU). Mature yeast 74S mitochondrial ribosomes consist of a small (37S) and a large (54S) subunit. The 37S small subunit contains a 15S ribosomal RNA (15S mt-rRNA) and 34 different proteins. The 54S large subunit contains a 21S rRNA (21S mt-rRNA) and 46 different proteins.

Its subcellular location is the mitochondrion. Functionally, component of the mitochondrial ribosome (mitoribosome), a dedicated translation machinery responsible for the synthesis of mitochondrial genome-encoded proteins, including at least some of the essential transmembrane subunits of the mitochondrial respiratory chain. The mitoribosomes are attached to the mitochondrial inner membrane and translation products are cotranslationally integrated into the membrane. The chain is Large ribosomal subunit protein uL30m (MRPL33) from Saccharomyces cerevisiae (strain ATCC 204508 / S288c) (Baker's yeast).